Consider the following 342-residue polypeptide: Dof zinc finger protein DOF4.6 (342 aa).

A disordered region spans residues 21 to 54 (NTCPKPQPQPLQPQQPPSVGGERKARPEKDQAVN). Over residues 25–36 (KPQPQPLQPQQP) the composition is skewed to pro residues. Residues 41–51 (GERKARPEKDQ) are compositionally biased toward basic and acidic residues. A Dof-type zinc finger spans residues 53–107 (VNCPRCNSTNTKFCYYNNYSLTQPRYFCKGCRRYWTEGGSLRNIPVGGGSRKNKR). Positions 55, 58, 80, and 83 each coordinate Zn(2+). A disordered region spans residues 94 to 136 (RNIPVGGGSRKNKRSHSSSSDISNNHSDSTQPATKKHLSDHHH). Positions 110-122 (SSSSDISNNHSDS) are enriched in low complexity. Residues 127–136 (TKKHLSDHHH) show a composition bias toward basic residues.

In terms of tissue distribution, accumulates in the stele.

Its subcellular location is the nucleus. Functionally, transcription factor that binds specifically to a 5'-AA[AG]G-3' consensus core sequence. The sequence is that of Dof zinc finger protein DOF4.6 from Arabidopsis thaliana (Mouse-ear cress).